The primary structure comprises 51 residues: Large ribosomal subunit protein eL39 (51 aa).

The protein belongs to the eukaryotic ribosomal protein eL39 family.

The protein is Large ribosomal subunit protein eL39 of Methanosarcina acetivorans (strain ATCC 35395 / DSM 2834 / JCM 12185 / C2A).